A 346-amino-acid polypeptide reads, in one-letter code: Phosphoribosylformylglycinamidine cyclo-ligase (346 aa).

The protein belongs to the AIR synthase family.

It is found in the cytoplasm. It catalyses the reaction 2-formamido-N(1)-(5-O-phospho-beta-D-ribosyl)acetamidine + ATP = 5-amino-1-(5-phospho-beta-D-ribosyl)imidazole + ADP + phosphate + H(+). It functions in the pathway purine metabolism; IMP biosynthesis via de novo pathway; 5-amino-1-(5-phospho-D-ribosyl)imidazole from N(2)-formyl-N(1)-(5-phospho-D-ribosyl)glycinamide: step 2/2. This is Phosphoribosylformylglycinamidine cyclo-ligase from Bacillus cereus (strain ZK / E33L).